The primary structure comprises 499 residues: Proline--tRNA ligase (499 aa).

The span at 1 to 17 shows a compositional bias: basic and acidic residues; sequence MTKDGGKKDNQGQDKKA. The disordered stretch occupies residues 1-21; that stretch reads MTKDGGKKDNQGQDKKAQQYG.

Belongs to the class-II aminoacyl-tRNA synthetase family. ProS type 3 subfamily. As to quaternary structure, homodimer.

It is found in the cytoplasm. The catalysed reaction is tRNA(Pro) + L-proline + ATP = L-prolyl-tRNA(Pro) + AMP + diphosphate. Functionally, catalyzes the attachment of proline to tRNA(Pro) in a two-step reaction: proline is first activated by ATP to form Pro-AMP and then transferred to the acceptor end of tRNA(Pro). Can inadvertently accommodate and process cysteine. The chain is Proline--tRNA ligase (proS) from Deinococcus radiodurans (strain ATCC 13939 / DSM 20539 / JCM 16871 / CCUG 27074 / LMG 4051 / NBRC 15346 / NCIMB 9279 / VKM B-1422 / R1).